Reading from the N-terminus, the 196-residue chain is UPF0316 protein LBL_2483 (196 aa).

The next 3 helical transmembrane spans lie at 12–32 (YCVL…IGTI), 44–64 (IAAS…TQVI), and 70–90 (ALCY…GMIL).

The protein belongs to the UPF0316 family.

Its subcellular location is the cell membrane. The polypeptide is UPF0316 protein LBL_2483 (Leptospira borgpetersenii serovar Hardjo-bovis (strain L550)).